The sequence spans 303 residues: ATP phosphoribosyltransferase (303 aa).

This sequence belongs to the ATP phosphoribosyltransferase family. Long subfamily. Requires Mg(2+) as cofactor.

Its subcellular location is the cytoplasm. The enzyme catalyses 1-(5-phospho-beta-D-ribosyl)-ATP + diphosphate = 5-phospho-alpha-D-ribose 1-diphosphate + ATP. The protein operates within amino-acid biosynthesis; L-histidine biosynthesis; L-histidine from 5-phospho-alpha-D-ribose 1-diphosphate: step 1/9. Its activity is regulated as follows. Feedback inhibited by histidine. In terms of biological role, catalyzes the condensation of ATP and 5-phosphoribose 1-diphosphate to form N'-(5'-phosphoribosyl)-ATP (PR-ATP). Has a crucial role in the pathway because the rate of histidine biosynthesis seems to be controlled primarily by regulation of HisG enzymatic activity. The polypeptide is ATP phosphoribosyltransferase (Haemophilus influenzae (strain PittGG)).